The sequence spans 481 residues: Glutamyl-tRNA(Gln) amidotransferase subunit A (481 aa).

Residues Lys-78 and Ser-153 each act as charge relay system in the active site. Residue Ser-177 is the Acyl-ester intermediate of the active site.

The protein belongs to the amidase family. GatA subfamily. Heterotrimer of A, B and C subunits.

The enzyme catalyses L-glutamyl-tRNA(Gln) + L-glutamine + ATP + H2O = L-glutaminyl-tRNA(Gln) + L-glutamate + ADP + phosphate + H(+). Functionally, allows the formation of correctly charged Gln-tRNA(Gln) through the transamidation of misacylated Glu-tRNA(Gln) in organisms which lack glutaminyl-tRNA synthetase. The reaction takes place in the presence of glutamine and ATP through an activated gamma-phospho-Glu-tRNA(Gln). The polypeptide is Glutamyl-tRNA(Gln) amidotransferase subunit A (Borreliella afzelii (strain PKo) (Borrelia afzelii)).